A 368-amino-acid polypeptide reads, in one-letter code: 4-hydroxy-3-methylbut-2-en-1-yl diphosphate synthase (flavodoxin) (368 aa).

Residues C268, C271, C303, and E310 each coordinate [4Fe-4S] cluster.

Belongs to the IspG family. [4Fe-4S] cluster serves as cofactor.

It catalyses the reaction (2E)-4-hydroxy-3-methylbut-2-enyl diphosphate + oxidized [flavodoxin] + H2O + 2 H(+) = 2-C-methyl-D-erythritol 2,4-cyclic diphosphate + reduced [flavodoxin]. It functions in the pathway isoprenoid biosynthesis; isopentenyl diphosphate biosynthesis via DXP pathway; isopentenyl diphosphate from 1-deoxy-D-xylulose 5-phosphate: step 5/6. Converts 2C-methyl-D-erythritol 2,4-cyclodiphosphate (ME-2,4cPP) into 1-hydroxy-2-methyl-2-(E)-butenyl 4-diphosphate. The polypeptide is 4-hydroxy-3-methylbut-2-en-1-yl diphosphate synthase (flavodoxin) (Listeria monocytogenes serotype 4b (strain CLIP80459)).